A 455-amino-acid chain; its full sequence is MLLAQRRLISLGCRSKPIKTIYSSSKVLGLCTSAKMALKFKNAKRIEGLDSNVWVEFTKLAADPSVVNLGQGFPDISPPSYVKEELSKAAFIDNMNQYTRGFGHPALVKALSCLYGKIYQRQIDPNEEILVAVGAYGSLFNSIQGLVDPGDEVIIMVPFYDCYEPMVRMAGAVPVFIPLRSKPTDGMKWTSSDWTFDPRELESKFSSKTKAIILNTPHNPLGKVYTRQELQVIADLCVKHDTLCISDEVYEWLVYTGHTHVKIATLPGMWERTITIGSAGKTFSVTGWKLGWSIGPAHLIKHLQTVQQNSFYTCATPLQAALAEAFWIDIKRMDDPECYFNSLPKELEVKRDRMVRLLNSVGLKPIVPDGGYFIIADVSSLGADLSDMNSDEPYDYKFVKWMTKHKKLTAIPVSAFCDSKSKPHFEKLVRFCFIKKDSTLDAAEEIFRAWNSQKS.

Residue glycine 72 coordinates substrate. Lysine 117 is modified (N6-acetyllysine; alternate). N6-succinyllysine; alternate is present on lysine 117. Asparagine 219 is a substrate binding site. N6-(pyridoxal phosphate)lysine is present on lysine 281. A substrate-binding site is contributed by arginine 430.

Belongs to the class-I pyridoxal-phosphate-dependent aminotransferase family. In terms of assembly, homodimer. It depends on pyridoxal 5'-phosphate as a cofactor. In terms of tissue distribution, widely expressed, with higher expression levels in liver, kidney, heart and neuroendocrine tissues.

The enzyme catalyses L-kynurenine + 2-oxoglutarate = kynurenate + L-glutamate + H2O. It carries out the reaction L-kynurenine + glyoxylate = kynurenate + glycine + H2O. The catalysed reaction is 3-hydroxy-L-kynurenine + glyoxylate = xanthurenate + glycine + H2O. It catalyses the reaction an S-substituted L-cysteine + H2O = a thiol + pyruvate + NH4(+). The protein operates within amino-acid degradation; L-kynurenine degradation; kynurenate from L-kynurenine: step 1/2. Kynurenine transamination is competitively inhibited by cysteine, glutamine, histidine, methionine, leucine, or phenylalanine. Its function is as follows. Catalyzes the irreversible transamination of the L-tryptophan metabolite L-kynurenine to form kynurenic acid (KA), an intermediate in the tryptophan catabolic pathway which is also a broad spectrum antagonist of the three ionotropic excitatory amino acid receptors among others. May catalyze the beta-elimination of S-conjugates and Se-conjugates of L-(seleno)cysteine, resulting in the cleavage of the C-S or C-Se bond. Has transaminase activity towards L-kynurenine, tryptophan, phenylalanine, serine, cysteine, methionine, histidine, glutamine and asparagine with glyoxylate as an amino group acceptor (in vitro). Has lower activity with 2-oxoglutarate as amino group acceptor (in vitro). The sequence is that of Kynurenine--oxoglutarate transaminase 3 (Kyat3) from Mus musculus (Mouse).